We begin with the raw amino-acid sequence, 320 residues long: 1-aminocyclopropane-1-carboxylate oxidase 3 (320 aa).

Residues 153–253 enclose the Fe2OG dioxygenase domain; that stretch reads PNFGTKVSNY…RMSLASFYNP (101 aa). The Fe cation site is built by H177, D179, and H234.

It belongs to the iron/ascorbate-dependent oxidoreductase family. Fe cation serves as cofactor.

It carries out the reaction 1-aminocyclopropane-1-carboxylate + L-ascorbate + O2 = ethene + L-dehydroascorbate + hydrogen cyanide + CO2 + 2 H2O. Its pathway is alkene biosynthesis; ethylene biosynthesis via S-adenosyl-L-methionine; ethylene from S-adenosyl-L-methionine: step 2/2. This chain is 1-aminocyclopropane-1-carboxylate oxidase 3 (ACO3), found in Petunia hybrida (Petunia).